Reading from the N-terminus, the 1232-residue chain is DNA-directed RNA polymerase subunit beta (1232 aa).

The tract at residues 1170–1232 is disordered; that stretch reads SVDEDADELE…LDLDDFGDEH (63 aa). Residues 1171-1180 show a composition bias toward acidic residues; the sequence is VDEDADELEV. The span at 1189 to 1198 shows a compositional bias: basic and acidic residues; that stretch reads PEEKEEKEKE. The span at 1199-1232 shows a compositional bias: acidic residues; sequence DSDEYDDLREEDVEPDLEELSLDDLDLDDFGDEH.

This sequence belongs to the RNA polymerase beta chain family. In terms of assembly, the RNAP catalytic core consists of 2 alpha, 1 beta, 1 beta' and 1 omega subunit. When a sigma factor is associated with the core the holoenzyme is formed, which can initiate transcription.

The catalysed reaction is RNA(n) + a ribonucleoside 5'-triphosphate = RNA(n+1) + diphosphate. DNA-dependent RNA polymerase catalyzes the transcription of DNA into RNA using the four ribonucleoside triphosphates as substrates. This chain is DNA-directed RNA polymerase subunit beta, found in Clostridium botulinum (strain Kyoto / Type A2).